Consider the following 608-residue polypeptide: Dihydroxy-acid dehydratase, chloroplastic (608 aa).

Residues 1-34 (MQATIFSPRATLFPCKPLLPSHNVNSRRPSIISC) constitute a chloroplast transit peptide. S35 is modified (N-acetylserine). [2Fe-2S] cluster is bound at residue C100. A Mg(2+)-binding site is contributed by D132. Residue C173 coordinates [2Fe-2S] cluster. D174 is a Mg(2+) binding site. C245 serves as a coordination point for [2Fe-2S] cluster. Residue E497 coordinates Mg(2+). The active-site Proton acceptor is the S523.

This sequence belongs to the IlvD/Edd family. It depends on [2Fe-2S] cluster as a cofactor. Mg(2+) serves as cofactor.

Its subcellular location is the plastid. It localises to the chloroplast. It catalyses the reaction (2R)-2,3-dihydroxy-3-methylbutanoate = 3-methyl-2-oxobutanoate + H2O. The enzyme catalyses (2R,3R)-2,3-dihydroxy-3-methylpentanoate = (S)-3-methyl-2-oxopentanoate + H2O. The protein operates within amino-acid biosynthesis; L-isoleucine biosynthesis; L-isoleucine from 2-oxobutanoate: step 3/4. It participates in amino-acid biosynthesis; L-valine biosynthesis; L-valine from pyruvate: step 3/4. With respect to regulation, is highly competitively inhibited by the fungal sesquiterpenoid aspterric acid, which is effective as a herbicide in spray applications. Its function is as follows. Functions in the biosynthesis of branched-chain amino acids. Catalyzes the dehydration of (2R,3R)-2,3-dihydroxy-3-methylpentanoate (2,3-dihydroxy-3-methylvalerate) into 2-oxo-3-methylpentanoate (2-oxo-3-methylvalerate) and of (2R)-2,3-dihydroxy-3-methylbutanoate (2,3-dihydroxyisovalerate) into 2-oxo-3-methylbutanoate (2-oxoisovalerate), the penultimate precursor to L-isoleucine and L-valine, respectively. This is Dihydroxy-acid dehydratase, chloroplastic from Arabidopsis thaliana (Mouse-ear cress).